The following is a 234-amino-acid chain: Mediator of RNA polymerase II transcription subunit 4 (234 aa).

Residues 71–124 (HQEAYRRLVEKKNEVAGLEMRVRGLVKRLEEGRKELEGMIDQGERSLEDIQKSE) adopt a coiled-coil conformation. Positions 188–234 (GVVGEEQKAPQKVEERREHVEHEESGRRYDPNAVFQLDLNSDESDED) are disordered. Residues 189–217 (VVGEEQKAPQKVEERREHVEHEESGRRYD) are compositionally biased toward basic and acidic residues.

It belongs to the Mediator complex subunit 4 family. In terms of assembly, component of the Mediator complex.

It is found in the nucleus. Its function is as follows. Component of the Mediator complex, a coactivator involved in the regulated transcription of nearly all RNA polymerase II-dependent genes. Mediator functions as a bridge to convey information from gene-specific regulatory proteins to the basal RNA polymerase II transcription machinery. Mediator is recruited to promoters by direct interactions with regulatory proteins and serves as a scaffold for the assembly of a functional preinitiation complex with RNA polymerase II and the general transcription factors. This Cryptococcus neoformans var. neoformans serotype D (strain B-3501A) (Filobasidiella neoformans) protein is Mediator of RNA polymerase II transcription subunit 4 (MED4).